We begin with the raw amino-acid sequence, 214 residues long: Ribosomal RNA large subunit methyltransferase E (214 aa).

S-adenosyl-L-methionine-binding residues include G60, W62, D86, D102, and D127. K167 serves as the catalytic Proton acceptor.

It belongs to the class I-like SAM-binding methyltransferase superfamily. RNA methyltransferase RlmE family.

The protein localises to the cytoplasm. It catalyses the reaction uridine(2552) in 23S rRNA + S-adenosyl-L-methionine = 2'-O-methyluridine(2552) in 23S rRNA + S-adenosyl-L-homocysteine + H(+). In terms of biological role, specifically methylates the uridine in position 2552 of 23S rRNA at the 2'-O position of the ribose in the fully assembled 50S ribosomal subunit. In Herminiimonas arsenicoxydans, this protein is Ribosomal RNA large subunit methyltransferase E.